Here is a 466-residue protein sequence, read N- to C-terminus: Asparagine--tRNA ligase (466 aa).

Belongs to the class-II aminoacyl-tRNA synthetase family. As to quaternary structure, homodimer.

The protein localises to the cytoplasm. The catalysed reaction is tRNA(Asn) + L-asparagine + ATP = L-asparaginyl-tRNA(Asn) + AMP + diphosphate + H(+). The sequence is that of Asparagine--tRNA ligase from Shewanella putrefaciens (strain CN-32 / ATCC BAA-453).